A 332-amino-acid chain; its full sequence is Fructose-1,6-bisphosphatase class 1 (332 aa).

Mg(2+) contacts are provided by Glu-89, Asp-110, Leu-112, and Asp-113. Substrate contacts are provided by residues 113 to 116 (DGSS), Asn-206, Tyr-239, 257 to 259 (YLY), and Lys-269. Residue Glu-275 participates in Mg(2+) binding.

This sequence belongs to the FBPase class 1 family. In terms of assembly, homotetramer. Mg(2+) serves as cofactor.

It is found in the cytoplasm. It catalyses the reaction beta-D-fructose 1,6-bisphosphate + H2O = beta-D-fructose 6-phosphate + phosphate. It functions in the pathway carbohydrate biosynthesis; gluconeogenesis. The chain is Fructose-1,6-bisphosphatase class 1 from Shigella sonnei (strain Ss046).